A 153-amino-acid polypeptide reads, in one-letter code: FAD synthase (153 aa).

ATP contacts are provided by residues 9-10 (TF), 14-17 (HPGH), D97, and Y124.

Belongs to the archaeal FAD synthase family. In terms of assembly, homodimer. It depends on a divalent metal cation as a cofactor.

The catalysed reaction is FMN + ATP + H(+) = FAD + diphosphate. The protein operates within cofactor biosynthesis; FAD biosynthesis; FAD from FMN: step 1/1. Its function is as follows. Catalyzes the transfer of the AMP portion of ATP to flavin mononucleotide (FMN) to produce flavin adenine dinucleotide (FAD) coenzyme. The sequence is that of FAD synthase from Methanobrevibacter smithii (strain ATCC 35061 / DSM 861 / OCM 144 / PS).